Reading from the N-terminus, the 77-residue chain is Major outer membrane lipoprotein Lpp (77 aa).

The signal sequence occupies residues Met1–Gly19. Cys20 carries the N-palmitoyl cysteine lipid modification. The S-diacylglycerol cysteine moiety is linked to residue Cys20. 2 repeats span residues Asn23–Val33 and Asn37–Val47. Residues Ile26–Ala74 adopt a coiled-coil conformation. Positions Ala56–Lys77 are disordered. At Lys77 the chain carries N6-murein peptidoglycan lysine.

It belongs to the Lpp family. In terms of assembly, homotrimer.

The protein localises to the cell outer membrane. Its subcellular location is the secreted. The protein resides in the cell wall. In terms of biological role, a highly abundant outer membrane lipoprotein that controls the distance between the inner and outer membranes. The only protein known to be covalently linked to the peptidoglycan network (PGN). Also non-covalently binds the PGN. The link between the cell outer membrane and PGN contributes to maintenance of the structural and functional integrity of the cell envelope, and maintains the correct distance between the PGN and the outer membrane. In Serratia marcescens, this protein is Major outer membrane lipoprotein Lpp.